The primary structure comprises 233 residues: Ribosome maturation factor RimP (233 aa).

Residues 167 to 179 (RGKAAEREKKRDL) show a composition bias toward basic and acidic residues. The interval 167-233 (RGKAAEREKK…RARRGEIDPD (67 aa)) is disordered. A compositionally biased stretch (low complexity) spans 187 to 196 (PHAKPAAQAK). The span at 220-233 (LAADRARRGEIDPD) shows a compositional bias: basic and acidic residues.

Belongs to the RimP family.

It localises to the cytoplasm. In terms of biological role, required for maturation of 30S ribosomal subunits. This chain is Ribosome maturation factor RimP, found in Bradyrhizobium sp. (strain ORS 278).